We begin with the raw amino-acid sequence, 308 residues long: Porphobilinogen deaminase (308 aa).

Cys240 carries the post-translational modification S-(dipyrrolylmethanemethyl)cysteine.

This sequence belongs to the HMBS family. In terms of assembly, monomer. Dipyrromethane serves as cofactor.

It catalyses the reaction 4 porphobilinogen + H2O = hydroxymethylbilane + 4 NH4(+). It functions in the pathway porphyrin-containing compound metabolism; protoporphyrin-IX biosynthesis; coproporphyrinogen-III from 5-aminolevulinate: step 2/4. Functionally, tetrapolymerization of the monopyrrole PBG into the hydroxymethylbilane pre-uroporphyrinogen in several discrete steps. The protein is Porphobilinogen deaminase of Laribacter hongkongensis (strain HLHK9).